Reading from the N-terminus, the 712-residue chain is Polyribonucleotide nucleotidyltransferase (712 aa).

The Mg(2+) site is built by aspartate 493 and aspartate 499. Residues 560 to 622 (PRLTKLTIDP…RDAEAAIERI (63 aa)) form the KH domain. Residues 632 to 700 (GEDYVGTVKG…DDGKMRLTRK (69 aa)) enclose the S1 motif domain.

It belongs to the polyribonucleotide nucleotidyltransferase family. Mg(2+) is required as a cofactor.

The protein localises to the cytoplasm. The enzyme catalyses RNA(n+1) + phosphate = RNA(n) + a ribonucleoside 5'-diphosphate. Functionally, involved in mRNA degradation. Catalyzes the phosphorolysis of single-stranded polyribonucleotides processively in the 3'- to 5'-direction. The sequence is that of Polyribonucleotide nucleotidyltransferase from Salinibacter ruber (strain DSM 13855 / M31).